A 249-amino-acid polypeptide reads, in one-letter code: Small ribosomal subunit protein uS2 (249 aa).

It belongs to the universal ribosomal protein uS2 family.

The sequence is that of Small ribosomal subunit protein uS2 from Acinetobacter baylyi (strain ATCC 33305 / BD413 / ADP1).